The following is a 326-amino-acid chain: MASILELRSRIKSVNSTKKITKAQELIATSRITKAQSRVAAAKPYAEEITKVLSELASASASLDHPLLNERTDPKRAAVLVVTSDRGMCGGYNSNVLKEAEELFQLLRSEGKDPVIYVLGSKGLGYYTFRGRDLGGAWTGFSQDPGYSDAAKASRHLVDLFMAGSGSEVPAPNGEGTIEGVDELHIVYTRFVSMLTQSPEVRRMAPLEVMVSEERVELGEDMLSNGHGSSDSEPVAGYNFEPEPDKLLGALLPKYISTRIYSSLLDAAASESAARRTAMKAATDNANELVNTLSRQANQARQAQITQEISEIVGGANALASSAGSD.

Belongs to the ATPase gamma chain family. In terms of assembly, F-type ATPases have 2 components, CF(1) - the catalytic core - and CF(0) - the membrane proton channel. CF(1) has five subunits: alpha(3), beta(3), gamma(1), delta(1), epsilon(1). CF(0) has three main subunits: a, b and c.

The protein localises to the cell membrane. In terms of biological role, produces ATP from ADP in the presence of a proton gradient across the membrane. The gamma chain is believed to be important in regulating ATPase activity and the flow of protons through the CF(0) complex. The sequence is that of ATP synthase gamma chain from Rhodococcus jostii (strain RHA1).